The following is a 489-amino-acid chain: Cytochrome P450 monooxygenase bfoB (489 aa).

The signal sequence occupies residues 1-18 (MLALYLIAGLLVGLLVYR). Residues Asn113, Asn348, and Asn386 are each glycosylated (N-linked (GlcNAc...) asparagine). Residue Cys429 coordinates heme.

Belongs to the cytochrome P450 family. It depends on heme as a cofactor.

The enzyme catalyses 2 fonsecin B + NADPH + O2 + H(+) = bifonsecin B + NADP(+) + 2 H2O. It carries out the reaction 2 rubrofusarin B + NADPH + O2 + 3 H(+) = nigerone + NADP(+) + 2 H2O. It participates in secondary metabolite biosynthesis. Functionally, cytochrome P450 monooxygenase; part of the gene cluster that mediates the biosynthesis of bifonsecin B, a dimeric gamma-naphthopyrone. The first step in the biosynthesis of bifonsecin B is the production of gamma-naphthopyrone precursor YWA1 by the non-reducing polyketide synthase albA, via condensation of one acetyl-CoA starter unit with 6 malonyl-CoA units. YWA1 is then methylated by bfoE at position C-6 to yield foncesin which is further methylated at position C-8 by bfoD to produce fonsecin B. A key enzyme in the biosynthetic pathway is the cytochrome P450 monooxygenase bfoB which catalyzes the oxidative dimerization of fonsecin B to bifonsecin B. Bfob also catalyzes the oxidative dimerization of rubrofusarin B into nigerone. The stereoselectivity of bfoB is influenced by the two natural monomeric substrates; homodimerization of fonsecin B yields a stereochemically pure biaryl, M-foncerine B, while rubrofusarin B yields a mixture of enantiomers M- and P-nigerone. The chain is Cytochrome P450 monooxygenase bfoB from Aspergillus brasiliensis (strain CBS 101740 / IMI 381727 / IBT 21946).